The sequence spans 155 residues: Interleukin-2 (155 aa).

The first 20 residues, 1–20 (MYKIQLLSCIALTLALVANG), serve as a signal peptide directing secretion. O-linked (GalNAc...) threonine glycosylation occurs at T23. Cysteines 79 and 127 form a disulfide.

The protein belongs to the IL-2 family.

It is found in the secreted. Functionally, cytokine produced by activated CD4-positive helper T-cells and to a lesser extend activated CD8-positive T-cells and natural killer (NK) cells that plays pivotal roles in the immune response and tolerance. Binds to a receptor complex composed of either the high-affinity trimeric IL-2R (IL2RA/CD25, IL2RB/CD122 and IL2RG/CD132) or the low-affinity dimeric IL-2R (IL2RB and IL2RG). Interaction with the receptor leads to oligomerization and conformation changes in the IL-2R subunits resulting in downstream signaling starting with phosphorylation of JAK1 and JAK3. In turn, JAK1 and JAK3 phosphorylate the receptor to form a docking site leading to the phosphorylation of several substrates including STAT5. This process leads to activation of several pathways including STAT, phosphoinositide-3-kinase/PI3K and mitogen-activated protein kinase/MAPK pathways. Functions as a T-cell growth factor and can increase NK-cell cytolytic activity as well. Promotes strong proliferation of activated B-cells and subsequently immunoglobulin production. Plays a pivotal role in regulating the adaptive immune system by controlling the survival and proliferation of regulatory T-cells, which are required for the maintenance of immune tolerance. Moreover, participates in the differentiation and homeostasis of effector T-cell subsets, including Th1, Th2, Th17 as well as memory CD8-positive T-cells. The chain is Interleukin-2 (IL2) from Bos taurus (Bovine).